The following is a 204-amino-acid chain: Elongation factor Ts (204 aa).

The involved in Mg(2+) ion dislocation from EF-Tu stretch occupies residues 80 to 83; it reads TDFV.

The protein belongs to the EF-Ts family.

The protein localises to the cytoplasm. Its function is as follows. Associates with the EF-Tu.GDP complex and induces the exchange of GDP to GTP. It remains bound to the aminoacyl-tRNA.EF-Tu.GTP complex up to the GTP hydrolysis stage on the ribosome. The chain is Elongation factor Ts from Thermoanaerobacter sp. (strain X514).